A 67-amino-acid chain; its full sequence is MARITVEDCLEHIPNRFQLVLAATYRARMLSQGHAPKIESRNKPAVTALREIAEGKIGLEMLKKVPG.

It belongs to the RNA polymerase subunit omega family. As to quaternary structure, the RNAP catalytic core consists of 2 alpha, 1 beta, 1 beta' and 1 omega subunit. When a sigma factor is associated with the core the holoenzyme is formed, which can initiate transcription.

It carries out the reaction RNA(n) + a ribonucleoside 5'-triphosphate = RNA(n+1) + diphosphate. In terms of biological role, promotes RNA polymerase assembly. Latches the N- and C-terminal regions of the beta' subunit thereby facilitating its interaction with the beta and alpha subunits. This is DNA-directed RNA polymerase subunit omega from Paracidovorax citrulli (strain AAC00-1) (Acidovorax citrulli).